The sequence spans 342 residues: tRNA-specific 2-thiouridylase MnmA 2 (342 aa).

Residue Cys-62 is the Nucleophile of the active site. Cys-62 and Cys-160 form a disulfide bridge. An ATP-binding site is contributed by Gly-86. The segment at 110 to 112 (KDQ) is interaction with tRNA. The Cysteine persulfide intermediate role is filled by Cys-160. The segment at 268-269 (RY) is interaction with tRNA.

Belongs to the MnmA/TRMU family.

It is found in the cytoplasm. The catalysed reaction is S-sulfanyl-L-cysteinyl-[protein] + uridine(34) in tRNA + AH2 + ATP = 2-thiouridine(34) in tRNA + L-cysteinyl-[protein] + A + AMP + diphosphate + H(+). Catalyzes the 2-thiolation of uridine at the wobble position (U34) of tRNA, leading to the formation of s(2)U34. The sequence is that of tRNA-specific 2-thiouridylase MnmA 2 from Syntrophus aciditrophicus (strain SB).